A 585-amino-acid polypeptide reads, in one-letter code: Glycerol-3-phosphate dehydrogenase 2 (585 aa).

Position 37-65 (37-65) interacts with FAD; that stretch reads DVVVIGGGVVGSGCALDAATRGLKVALVE.

This sequence belongs to the FAD-dependent glycerol-3-phosphate dehydrogenase family. It depends on FAD as a cofactor.

Its subcellular location is the cytoplasm. The enzyme catalyses a quinone + sn-glycerol 3-phosphate = dihydroxyacetone phosphate + a quinol. This chain is Glycerol-3-phosphate dehydrogenase 2 (glpD2), found in Mycobacterium bovis (strain ATCC BAA-935 / AF2122/97).